A 234-amino-acid chain; its full sequence is DNA repair protein RecO (234 aa).

Belongs to the RecO family.

Involved in DNA repair and RecF pathway recombination. This chain is DNA repair protein RecO, found in Halorhodospira halophila (strain DSM 244 / SL1) (Ectothiorhodospira halophila (strain DSM 244 / SL1)).